Reading from the N-terminus, the 506-residue chain is Maturase K (506 aa).

Belongs to the intron maturase 2 family. MatK subfamily.

The protein resides in the plastid. It is found in the chloroplast. Functionally, usually encoded in the trnK tRNA gene intron. Probably assists in splicing its own and other chloroplast group II introns. In Trifolium willdenovii (Tomcat clover), this protein is Maturase K.